Reading from the N-terminus, the 651-residue chain is E3 SUMO-protein ligase PIAS1 (651 aa).

At Ala2 the chain carries N-acetylalanine. The segment at 2–200 (ADSAELKQMV…KCDFTVQVQL (199 aa)) is required for interaction with MSX1. The 35-residue stretch at 11-45 (VMSLRVSELQVLLGYAGRNKHGRKHELLTKALHLL) folds into the SAP domain. Positions 19 to 23 (LQVLL) match the LXXLL motif motif. Glycyl lysine isopeptide (Lys-Gly) (interchain with G-Cter in SUMO2) cross-links involve residues Lys40 and Lys46. A Nuclear localization signal motif is present at residues 56–64 (KIKELYRRR). Residues 124–288 (HLTSALHPVH…SMAVYLVKQL (165 aa)) form the PINIT domain. Glycyl lysine isopeptide (Lys-Gly) (interchain with G-Cter in SUMO2) cross-links involve residues Lys137 and Lys238. An SP-RING-type zinc finger spans residues 320–405 (PDSEIATTSL…LKYCTDCDEI (86 aa)). Zn(2+) contacts are provided by Cys351, His353, Cys374, and Cys377. Positions 368-380 (KKPTWVCPVCDKK) match the Nuclear localization signal motif. Residue Lys453 forms a Glycyl lysine isopeptide (Lys-Gly) (interchain with G-Cter in SUMO2) linkage. Positions 462 to 473 (LTIDSSSDEEEE) are SUMO1-binding. Positions 465 to 511 (DSSSDEEEEEPPAKRTCPSLSPTSPLSNKGILSLPHQASPVSRTPSL) are disordered. Ser467, Ser468, Ser483, and Ser485 each carry phosphoserine. Low complexity predominate over residues 482–491 (PSLSPTSPLS). Thr487 is subject to Phosphothreonine. Phosphoserine occurs at positions 488 and 491. A Glycyl lysine isopeptide (Lys-Gly) (interchain with G-Cter in SUMO2) cross-link involves residue Lys493. Ser503, Ser510, and Ser522 each carry phosphoserine. 2 repeat units span residues 520–523 (NTSL) and 557–560 (NTSL). Residues 520 to 615 (NTSLIQDYRH…GSSSGSNSSL (96 aa)) are 4 X 4 AA repeats of N-T-S-L. A 3; approximate repeat occupies 598–601 (STSL). Residues 600 to 630 (SLPATNGSSSGSNSSLVSSNSLRESHGHGVA) form a disordered region. A compositionally biased stretch (low complexity) spans 605–621 (NGSSSGSNSSLVSSNSL). Residues 612 to 615 (NSSL) form a 4; approximate repeat.

Belongs to the PIAS family. As to quaternary structure, interacts with NR2C1; the interaction promotes its sumoylation. Interacts with DDX21, CSRP2, AXIN1, JUN, SATB2, PLAG1, TP53 and STAT1 (dimer), following IFNA1-stimulation. Interacts with SP3 (preferentially when SUMO-modified). Interacts with KLF8; the interaction results in SUMO ligation and repression of KLF8 transcriptional activity and of its cell cycle progression into G(1) phase. Interacts with CHUK/IKKA; this interaction induces PIAS1 phosphorylation. Interacts with PTK2/FAK1; the interaction promotes its sumoylation. Interacts with SUMO1, UBE2I, NCOA2 and AR. Interacts with NR2C1; the interaction promotes its sumoylation. Interacts with DDX5. Interacts with MTA1. Interacts with PML (isoform PML-12). Interacts with PRDM1. Interacts (via N-terminus) with MSX1 (via C-terminus); the interaction is required for the localization of both proteins to the nuclear periphery and specific binding of MSX1 to the core enhancer region in target gene promoters. In terms of processing, sumoylated. In terms of tissue distribution, expressed in kidney, heart, spleen, brain and cerebellum; weak expression, if any, in liver and lung.

The protein resides in the nucleus. Its subcellular location is the nucleus speckle. It is found in the PML body. The protein localises to the cytoplasm. It localises to the cytoskeleton. It catalyses the reaction S-ubiquitinyl-[E2 ubiquitin-conjugating enzyme]-L-cysteine + [acceptor protein]-L-lysine = [E2 ubiquitin-conjugating enzyme]-L-cysteine + N(6)-ubiquitinyl-[acceptor protein]-L-lysine.. It participates in protein modification; protein sumoylation. Functionally, functions as an E3-type small ubiquitin-like modifier (SUMO) ligase, stabilizing the interaction between UBE2I and the substrate, and as a SUMO-tethering factor. Catalyzes sumoylation of various proteins, such as CEBPB, MRE11, MTA1, PTK2 and PML. Plays a crucial role as a transcriptional coregulation in various cellular pathways, including the STAT pathway, the p53 pathway and the steroid hormone signaling pathway. In vitro, binds A/T-rich DNA. The effects of this transcriptional coregulation, transactivation or silencing, may vary depending upon the biological context. Mediates sumoylation of MRE11, stabilizing MRE11 on chromatin during end resection. Sumoylates PML (at 'Lys-65' and 'Lys-160') and PML-RAR and promotes their ubiquitin-mediated degradation. PIAS1-mediated sumoylation of PML promotes its interaction with CSNK2A1/CK2 which in turn promotes PML phosphorylation and degradation. Enhances the sumoylation of MTA1 and may participate in its paralog-selective sumoylation. Plays a dynamic role in adipogenesis by promoting the SUMOylation and degradation of CEBPB. Mediates the nuclear mobility and localization of MSX1 to the nuclear periphery, whereby MSX1 is brought into the proximity of target myoblast differentiation factor genes. Also required for the binding of MSX1 to the core enhancer region in target gene promoter regions, independent of its sumoylation activity. Capable of binding to the core enhancer region TAAT box in the MYOD1 gene promoter. This is E3 SUMO-protein ligase PIAS1 (Pias1) from Mus musculus (Mouse).